The sequence spans 197 residues: Holliday junction branch migration complex subunit RuvA (197 aa).

Positions 1 to 64 (MIGHLEGRLR…EDAIQLYGFR (64 aa)) are domain I. Residues 65–143 (TVAEKDMFLR…VKKGREAEQP (79 aa)) are domain II. Residues 144–145 (AP) form a flexible linker region. Residues 146–197 (AAESSYGDAYSALVNLGYRPAEAEKALGKAIKSLGADPPVEKLLKETLRLLA) are domain III.

Belongs to the RuvA family. As to quaternary structure, homotetramer. Forms an RuvA(8)-RuvB(12)-Holliday junction (HJ) complex. HJ DNA is sandwiched between 2 RuvA tetramers; dsDNA enters through RuvA and exits via RuvB. An RuvB hexamer assembles on each DNA strand where it exits the tetramer. Each RuvB hexamer is contacted by two RuvA subunits (via domain III) on 2 adjacent RuvB subunits; this complex drives branch migration. In the full resolvosome a probable DNA-RuvA(4)-RuvB(12)-RuvC(2) complex forms which resolves the HJ.

The protein resides in the cytoplasm. Its function is as follows. The RuvA-RuvB-RuvC complex processes Holliday junction (HJ) DNA during genetic recombination and DNA repair, while the RuvA-RuvB complex plays an important role in the rescue of blocked DNA replication forks via replication fork reversal (RFR). RuvA specifically binds to HJ cruciform DNA, conferring on it an open structure. The RuvB hexamer acts as an ATP-dependent pump, pulling dsDNA into and through the RuvAB complex. HJ branch migration allows RuvC to scan DNA until it finds its consensus sequence, where it cleaves and resolves the cruciform DNA. The sequence is that of Holliday junction branch migration complex subunit RuvA from Syntrophobacter fumaroxidans (strain DSM 10017 / MPOB).